Consider the following 66-residue polypeptide: Prokaryotic ubiquitin-like protein Pup (66 aa).

Low complexity predominate over residues 1–10; it reads MAGQEQQSSS. A disordered region spans residues 1 to 39; the sequence is MAGQEQQSSSPREEEHEVADAPVPVPSSPQASAHTDGVD. The tract at residues 23 to 60 is ARC ATPase binding; it reads VPVPSSPQASAHTDGVDDLLDEIDGVLESNAEEFVRGF. Residue Gln66 is modified to Deamidated glutamine. Gln66 is covalently cross-linked (Isoglutamyl lysine isopeptide (Gln-Lys) (interchain with K-? in acceptor proteins)).

This sequence belongs to the prokaryotic ubiquitin-like protein family. As to quaternary structure, strongly interacts with the proteasome-associated ATPase ARC through a hydrophobic interface; the interacting region of Pup lies in its C-terminal half. There is one Pup binding site per ARC hexamer ring. Is modified by deamidation of its C-terminal glutamine to glutamate by the deamidase Dop, a prerequisite to the subsequent pupylation process.

The protein operates within protein degradation; proteasomal Pup-dependent pathway. Functionally, protein modifier that is covalently attached to lysine residues of substrate proteins, thereby targeting them for proteasomal degradation. The tagging system is termed pupylation. In Renibacterium salmoninarum (strain ATCC 33209 / DSM 20767 / JCM 11484 / NBRC 15589 / NCIMB 2235), this protein is Prokaryotic ubiquitin-like protein Pup.